We begin with the raw amino-acid sequence, 353 residues long: UPF0283 membrane protein YcjF (353 aa).

3 helical membrane-spanning segments follow: residues 70–90, 100–120, and 213–233; these read MVMG…VQWT, VALG…GSVV, and ESTL…FIAW.

The protein belongs to the UPF0283 family.

It localises to the cell inner membrane. The polypeptide is UPF0283 membrane protein YcjF (Escherichia fergusonii (strain ATCC 35469 / DSM 13698 / CCUG 18766 / IAM 14443 / JCM 21226 / LMG 7866 / NBRC 102419 / NCTC 12128 / CDC 0568-73)).